A 211-amino-acid chain; its full sequence is Transcription factor ces-2 (211 aa).

The segment covering 83–101 has biased composition (low complexity); sequence VSSRSSTVSSSHFSSPQRS. Disordered regions lie at residues 83 to 152 and 184 to 211; these read VSSR…HALE and NSEV…TIEV. Basic and acidic residues predominate over residues 111–152; it reads PEEKKDSAYFERRRKNNDAAKRSRDARRQKEEQIASKAHALE. One can recognise a bZIP domain in the interval 116-179; that stretch reads DSAYFERRRK…AQLRFLLFSK (64 aa). Residues 122-140 are basic motif; that stretch reads RRRKNNDAAKRSRDARRQK. Residues 144–172 form a leucine-zipper region; the sequence is IASKAHALERENMQLRGKVSSLEQEAAQL. The segment covering 190–200 has biased composition (low complexity); it reads ESNDSTETNDS. Residues 201-211 show a composition bias toward basic and acidic residues; the sequence is NDSKSDSTIEV.

It belongs to the bZIP family. In terms of assembly, interacts with NFIL3 transcription factor homolog atf-2.

Its subcellular location is the nucleus. Its function is as follows. Transcription factor. Required to activate programmed cell death in the sister cells of the serotoninergic neurosecretory motor (NSM) neurons. Negatively regulates the activity of ces-1 which in turn negatively regulates the activities of cell-killing genes. Binds to the DNA sequence 5'-RTTACGTAAY-3'. Involved in the development of the excretory duct cell, by positively modulating embryonic transcription of putative transcription factor lin-48, acting in concert with NFIL3 transcription factor homolog atf-2. Positively modulates expression of neuropeptide pigment dispersing factor homologs pdf-1 and pdf-2. This Caenorhabditis elegans protein is Transcription factor ces-2 (ces-2).